Consider the following 994-residue polypeptide: MRRRPPSRGGRGAARARETRRQPRHRSGRRMAEAISCTLNCSCQSFKPGKINHRQCDQCKHGWVAHALSKLRIPPMYPTSQVEIVQSNVVFDISSLMLYGTQAIPVRLKILLDRLFSVLKQDEVLQILHALDWTLQDYIRGYVLQDASGKVLDHWSIMTSEEEVATLQQFLRFGETKSIVELMAIQEKEEQSIIIPPSTANVDIRAFIESCSHRSSSLPTPVDKGNPSSIHPFENLISNMTFMLPFQFFNPLPPALIGSLPEQYMLEQGHDQSQDPKQEVHGPFPDSSFLTSSSTPFQVEKDQCLNCPDAITKKEDSTHLSDSSSYNIVTKFERTQLSPEAKVKPERNSLGTKKGRVFCTACEKTFYDKGTLKIHYNAVHLKIKHKCTIEGCNMVFSSLRSRNRHSANPNPRLHMPMNRNNRDKDLRNSLNLASSENYKCPGFTVTSPDCRPPPSYPGSGEDSKGQPAFPNIGQNGVLFPNLKTVQPVLPFYRSPATPAEVANTPGILPSLPLLSSSIPEQLISNEMPFDALPKKKSRKSSMPIKIEKEAVEIANEKRHNLSSDEDMPLQVVSEDEQEACSPQSHRVSEEQHVQSGGLGKPFPEGERPCHRESVIESSGAISQTPEQATHNSERETEQTPALIMVPREVEDGGHEHYFTPGMEPQVPFSDYMELQQRLLAGGLFSALSNRGMAFPCLEDSKELEHVGQHALARQIEENRFQCDICKKTFKNACSVKIHHKNMHVKEMHTCTVEGCNATFPSRRSRDRHSSNLNLHQKALSQEALESSEDHFRAAYLLKDVAKEAYQDVAFTQQASQTSVIFKGTSRMGSLVYPITQVHSASLESYNSGPLSEGTILDLSTTSSMKSESSSHSSWDSDGVSEEGTVLMEDSDGNCEGSSLVPGEDEYPICVLMEKADQSLASLPSGLPITCHLCQKTYSNKGTFRAHYKTVHLRQLHKCKVPGCNTMFSSVRSRNRHSQNPNLHKSLASSPSHLQ.

The segment at 1–29 (MRRRPPSRGGRGAARARETRRQPRHRSGR) is disordered. A hydrophobic region spans residues 240 to 249 (MTFMLPFQFF). 2 C2H2-type zinc fingers span residues 357–380 (VFCT…NAVH) and 385–414 (HKCT…PRLH). Disordered stretches follow at residues 402-425 (RNRH…RDKD) and 444-472 (TVTS…FPNI). Positions 533-539 (PKKKSRK) match the Nuclear localization signal motif. Phosphoserine is present on residues Ser-537 and Ser-541. The tract at residues 555 to 639 (NEKRHNLSSD…HNSERETEQT (85 aa)) is disordered. A compositionally biased stretch (acidic residues) spans 563–578 (SDEDMPLQVVSEDEQE). Residues 603–614 (PEGERPCHRESV) show a composition bias toward basic and acidic residues. Over residues 615–630 (IESSGAISQTPEQATH) the composition is skewed to polar residues. 2 consecutive C2H2-type zinc fingers follow at residues 720 to 743 (FQCD…KNMH) and 748 to 775 (HTCT…LNLH). Low complexity predominate over residues 859 to 877 (STTSSMKSESSSHSSWDSD). The interval 859-881 (STTSSMKSESSSHSSWDSDGVSE) is disordered. C2H2-type zinc fingers lie at residues 928–951 (ITCH…KTVH) and 956–983 (HKCK…PNLH). A disordered region spans residues 970–994 (VRSRNRHSQNPNLHKSLASSPSHLQ).

As to quaternary structure, interacts with HSF2BP (via C-terminus). Post-translationally, phosphorylation on Ser-537 and Ser-541 leads to cytoplasmic localization. As to expression, in epidermis, primarily detected in cells of the basal or immediately suprabasal layers (at protein level). In hair follicles, mainly expressed in the outer root sheath (at protein level). Expressed in epidermis, testis and foreskin, and to a lower extent in thymus, spleen, mammary glands, placenta, brain and heart. Expressed in the ovary, notably in oocytes.

The protein resides in the nucleus. The protein localises to the cytoplasm. Its subcellular location is the nucleoplasm. Its function is as follows. Transcriptional activator. It is likely involved in the regulation of keratinocytes terminal differentiation in squamous epithelia and hair follicles. Required for the maintenance of spermatogenesis. It is involved in the positive regulation of oocyte maturation, probably acting through the control of BMP15 levels and regulation of AKT signaling cascade. May also play a role in the early development of embryos. The polypeptide is Zinc finger protein basonuclin-1 (BNC1) (Homo sapiens (Human)).